The primary structure comprises 246 residues: NLP effector protein Pc118548 (246 aa).

A signal peptide spans 1-19 (MNFRAFLLAAIAGIATINA). The short motif at 122–128 (GHRHYWE) is the Hepta-peptide GHRHDWE motif element. Residue asparagine 141 is glycosylated (N-linked (GlcNAc...) asparagine).

It belongs to the Necrosis inducing protein (NPP1) family.

It is found in the secreted. Its function is as follows. Secreted effector that contributes strongly to virulence during infection by P.capsici. Induces cell death in the Solanaceae, including Nicotiana benthamiana and hot pepper. The sequence is that of NLP effector protein Pc118548 from Phytophthora capsici.